We begin with the raw amino-acid sequence, 351 residues long: Photosystem II D2 protein (351 aa).

Residues 39–59 (CAYLAVGGWLTGTTFVTSWYT) traverse the membrane as a helical segment. Residue histidine 116 participates in chlorophyll a binding. A helical transmembrane segment spans residues 123–139 (GFCLRQFEIARLVGLRP). Positions 128 and 141 each coordinate pheophytin a. Residues 151 to 164 (VFVSVFLMYPLGQA) form a helical membrane-spanning segment. Histidine 196 contributes to the chlorophyll a binding site. The helical transmembrane segment at 206–226 (GALLCAIHGATVQNTLFEDGD) threads the bilayer. Histidine 213 and phenylalanine 260 together coordinate a plastoquinone. Histidine 213 contacts Fe cation. Histidine 267 serves as a coordination point for Fe cation. A helical membrane pass occupies residues 277 to 293 (GLWTSAFGIVGLALNLR).

The protein belongs to the reaction center PufL/M/PsbA/D family. As to quaternary structure, PSII is composed of 1 copy each of membrane proteins PsbA, PsbB, PsbC, PsbD, PsbE, PsbF, PsbH, PsbI, PsbJ, PsbK, PsbL, PsbM, PsbT, PsbX, PsbY, PsbZ, Psb30/Ycf12, at least 3 peripheral proteins of the oxygen-evolving complex and a large number of cofactors. It forms dimeric complexes. The D1/D2 heterodimer binds P680, chlorophylls that are the primary electron donor of PSII, and subsequent electron acceptors. It shares a non-heme iron and each subunit binds pheophytin, quinone, additional chlorophylls, carotenoids and lipids. There is also a Cl(-1) ion associated with D1 and D2, which is required for oxygen evolution. The PSII complex binds additional chlorophylls, carotenoids and specific lipids. is required as a cofactor.

It localises to the plastid. Its subcellular location is the chloroplast thylakoid membrane. It catalyses the reaction 2 a plastoquinone + 4 hnu + 2 H2O = 2 a plastoquinol + O2. Photosystem II (PSII) is a light-driven water:plastoquinone oxidoreductase that uses light energy to abstract electrons from H(2)O, generating O(2) and a proton gradient subsequently used for ATP formation. It consists of a core antenna complex that captures photons, and an electron transfer chain that converts photonic excitation into a charge separation. The D1/D2 (PsbA/PsbD) reaction center heterodimer binds P680, the primary electron donor of PSII as well as several subsequent electron acceptors. D2 is needed for assembly of a stable PSII complex. The protein is Photosystem II D2 protein of Pyropia yezoensis (Susabi-nori).